A 294-amino-acid polypeptide reads, in one-letter code: Probable 2-(5''-triphosphoribosyl)-3'-dephosphocoenzyme-A synthase (294 aa).

Belongs to the CitG/MdcB family.

It catalyses the reaction 3'-dephospho-CoA + ATP = 2'-(5''-triphospho-alpha-D-ribosyl)-3'-dephospho-CoA + adenine. The chain is Probable 2-(5''-triphosphoribosyl)-3'-dephosphocoenzyme-A synthase from Streptococcus pyogenes serotype M3 (strain ATCC BAA-595 / MGAS315).